The sequence spans 372 residues: Cytochrome b (372 aa).

Helical transmembrane passes span 25–45, 69–90, 105–125, and 170–190; these read FGSM…FLAI, WIMQ…YIHI, WVSG…GYVL, and FFAL…IHVM. Heme b-binding residues include histidine 75 and histidine 89. Residues histidine 174 and histidine 188 each contribute to the heme b site. Histidine 193 serves as a coordination point for a ubiquinone. 4 helical membrane passes run 218–238, 280–300, 312–332, and 339–358; these read YKDT…TSFF, LGGT…PFTH, MAQV…WAAT, and FTTI…IINP.

The protein belongs to the cytochrome b family. As to quaternary structure, the cytochrome bc1 complex contains 3 respiratory subunits (MT-CYB, CYC1 and UQCRFS1), 2 core proteins (UQCRC1 and UQCRC2) and probably 6 low-molecular weight proteins. It depends on heme b as a cofactor.

Its subcellular location is the mitochondrion inner membrane. Component of the ubiquinol-cytochrome c reductase complex (complex III or cytochrome b-c1 complex) that is part of the mitochondrial respiratory chain. The b-c1 complex mediates electron transfer from ubiquinol to cytochrome c. Contributes to the generation of a proton gradient across the mitochondrial membrane that is then used for ATP synthesis. The sequence is that of Cytochrome b (MT-CYB) from Heterodon simus (Southern hognose snake).